Here is a 706-residue protein sequence, read N- to C-terminus: Protein psiG (706 aa).

An N-terminal signal peptide occupies residues 1 to 23 (MKIILTLLIILFSLNKNLNFVSS). Residues 24 to 644 (EVTKSRICSI…FVCKPAAIIS (621 aa)) lie on the Extracellular side of the membrane. N-linked (GlcNAc...) asparagine glycosylation is found at Asn-95, Asn-107, Asn-212, Asn-296, Asn-429, Asn-521, Asn-532, and Asn-616. Positions 109-253 (TLDKSSNIYS…SDYCGVCQGD (145 aa)) constitute a PA14 domain. Residues 645 to 665 (TSVIVGVSVAAAVVAIAIVVA) form a helical membrane-spanning segment. Residues 666–706 (SKKGYDAWAASNNNSLASLTSNPLYENPTGNGDNPMYQPNS) lie on the Cytoplasmic side of the membrane. Residues 687 to 706 (NPLYENPTGNGDNPMYQPNS) form a disordered region. The segment covering 693-706 (PTGNGDNPMYQPNS) has biased composition (polar residues).

The protein belongs to the prespore-cell-inducing factor family.

The protein resides in the membrane. This Dictyostelium discoideum (Social amoeba) protein is Protein psiG (psiG-1).